A 449-amino-acid chain; its full sequence is Trigger factor (449 aa).

A PPIase FKBP-type domain is found at 173 to 258 (GDRVTVDFVG…LKKVEWPHLP (86 aa)).

It belongs to the FKBP-type PPIase family. Tig subfamily.

It is found in the cytoplasm. The catalysed reaction is [protein]-peptidylproline (omega=180) = [protein]-peptidylproline (omega=0). Its function is as follows. Involved in protein export. Acts as a chaperone by maintaining the newly synthesized protein in an open conformation. Functions as a peptidyl-prolyl cis-trans isomerase. This is Trigger factor from Burkholderia pseudomallei (strain 1710b).